The primary structure comprises 365 residues: UDP-N-acetylglucosamine--N-acetylmuramyl-(pentapeptide) pyrophosphoryl-undecaprenol N-acetylglucosamine transferase (365 aa).

Residues 19-21 (TGG), N131, R170, S201, I255, 274-279 (ALTVTE), and Q300 contribute to the UDP-N-acetyl-alpha-D-glucosamine site.

This sequence belongs to the glycosyltransferase 28 family. MurG subfamily.

It is found in the cell inner membrane. It catalyses the reaction di-trans,octa-cis-undecaprenyl diphospho-N-acetyl-alpha-D-muramoyl-L-alanyl-D-glutamyl-meso-2,6-diaminopimeloyl-D-alanyl-D-alanine + UDP-N-acetyl-alpha-D-glucosamine = di-trans,octa-cis-undecaprenyl diphospho-[N-acetyl-alpha-D-glucosaminyl-(1-&gt;4)]-N-acetyl-alpha-D-muramoyl-L-alanyl-D-glutamyl-meso-2,6-diaminopimeloyl-D-alanyl-D-alanine + UDP + H(+). The protein operates within cell wall biogenesis; peptidoglycan biosynthesis. Functionally, cell wall formation. Catalyzes the transfer of a GlcNAc subunit on undecaprenyl-pyrophosphoryl-MurNAc-pentapeptide (lipid intermediate I) to form undecaprenyl-pyrophosphoryl-MurNAc-(pentapeptide)GlcNAc (lipid intermediate II). The polypeptide is UDP-N-acetylglucosamine--N-acetylmuramyl-(pentapeptide) pyrophosphoryl-undecaprenol N-acetylglucosamine transferase (Acinetobacter baumannii (strain ATCC 17978 / DSM 105126 / CIP 53.77 / LMG 1025 / NCDC KC755 / 5377)).